Consider the following 454-residue polypeptide: MNIVILAAGMGKRMYSDLPKVLHPVAGRPMLAHVLDTARALSPSRLVVVVGHGAARVREAVAADDVAFAEQPQQLGTGHAVMQALPLLDDSQPTLVLYGDVPLTSAATLQALVAEAGTQRLGVLTVEMPDPTGYGRIVRDAAGSIVRIVEQKDASEAEKAIREINTGIIVCPTGHLRKWLSTLRNDNAQGEYYLTDTVERAVADGVETVSAQPAAIWETLGVNSKLQLAEVERIHQGNQARRLLEAGVTLLDPARIDVRGELSCGRDVTIDVGCVFEGRVHLEDGVRIGAHCVIRNSTVGAGAQVHPFCHIDEARVGPAGRIGPYARLRPGTELGEDVHIGNFVEVKNAQVAAHSKANHLAYVGDATVGSRVNIGAGTITCNYDGVNKHRTVIEDDVFIGSDTQLVAPVTVRRGATLGAGTTLTKEAPADKLTLSRAKQLTIDAWQRPVKQPKK.

The segment at 1–225 is pyrophosphorylase; it reads MNIVILAAGM…IWETLGVNSK (225 aa). Residues 6-9, Lys-20, Gln-71, 76-77, 98-100, Gly-135, Glu-150, Asn-165, and Asn-223 each bind UDP-N-acetyl-alpha-D-glucosamine; these read LAAG, GT, and YGD. Asp-100 is a binding site for Mg(2+). Asn-223 is a Mg(2+) binding site. The linker stretch occupies residues 226–246; the sequence is LQLAEVERIHQGNQARRLLEA. Positions 247–454 are N-acetyltransferase; the sequence is GVTLLDPARI…WQRPVKQPKK (208 aa). The UDP-N-acetyl-alpha-D-glucosamine site is built by Arg-329 and Lys-347. The active-site Proton acceptor is His-359. Positions 362 and 373 each coordinate UDP-N-acetyl-alpha-D-glucosamine. Acetyl-CoA is bound by residues Ala-376, 382–383, Ser-401, Ala-419, and Arg-436; that span reads NY.

This sequence in the N-terminal section; belongs to the N-acetylglucosamine-1-phosphate uridyltransferase family. The protein in the C-terminal section; belongs to the transferase hexapeptide repeat family. Homotrimer. Mg(2+) is required as a cofactor.

It is found in the cytoplasm. It catalyses the reaction alpha-D-glucosamine 1-phosphate + acetyl-CoA = N-acetyl-alpha-D-glucosamine 1-phosphate + CoA + H(+). The catalysed reaction is N-acetyl-alpha-D-glucosamine 1-phosphate + UTP + H(+) = UDP-N-acetyl-alpha-D-glucosamine + diphosphate. It functions in the pathway nucleotide-sugar biosynthesis; UDP-N-acetyl-alpha-D-glucosamine biosynthesis; N-acetyl-alpha-D-glucosamine 1-phosphate from alpha-D-glucosamine 6-phosphate (route II): step 2/2. The protein operates within nucleotide-sugar biosynthesis; UDP-N-acetyl-alpha-D-glucosamine biosynthesis; UDP-N-acetyl-alpha-D-glucosamine from N-acetyl-alpha-D-glucosamine 1-phosphate: step 1/1. It participates in bacterial outer membrane biogenesis; LPS lipid A biosynthesis. Its function is as follows. Catalyzes the last two sequential reactions in the de novo biosynthetic pathway for UDP-N-acetylglucosamine (UDP-GlcNAc). The C-terminal domain catalyzes the transfer of acetyl group from acetyl coenzyme A to glucosamine-1-phosphate (GlcN-1-P) to produce N-acetylglucosamine-1-phosphate (GlcNAc-1-P), which is converted into UDP-GlcNAc by the transfer of uridine 5-monophosphate (from uridine 5-triphosphate), a reaction catalyzed by the N-terminal domain. This chain is Bifunctional protein GlmU, found in Cupriavidus necator (strain ATCC 17699 / DSM 428 / KCTC 22496 / NCIMB 10442 / H16 / Stanier 337) (Ralstonia eutropha).